The chain runs to 441 residues: Divalent metal cation transporter MntH (441 aa).

The next 11 helical transmembrane spans lie at 41-61 (TGIA…IGYM), 74-94 (AAYG…AMLF), 116-136 (HFPA…AMAT), 141-161 (FLGG…AGMI), 183-203 (AAIA…LMIA), 223-243 (AALT…TLYL), 271-291 (VVVA…MAAS), 311-331 (IPVL…TSGV), 360-380 (AVTI…TRAM), 381-401 (VASQ…LLIL), and 419-439 (IVAG…VWAA).

It belongs to the NRAMP family.

It is found in the cell inner membrane. In terms of biological role, h(+)-stimulated, divalent metal cation uptake system. This chain is Divalent metal cation transporter MntH, found in Burkholderia ambifaria (strain ATCC BAA-244 / DSM 16087 / CCUG 44356 / LMG 19182 / AMMD) (Burkholderia cepacia (strain AMMD)).